The primary structure comprises 254 residues: Leucyl/phenylalanyl-tRNA--protein transferase (254 aa).

The protein belongs to the L/F-transferase family.

The protein resides in the cytoplasm. The catalysed reaction is N-terminal L-lysyl-[protein] + L-leucyl-tRNA(Leu) = N-terminal L-leucyl-L-lysyl-[protein] + tRNA(Leu) + H(+). It carries out the reaction N-terminal L-arginyl-[protein] + L-leucyl-tRNA(Leu) = N-terminal L-leucyl-L-arginyl-[protein] + tRNA(Leu) + H(+). It catalyses the reaction L-phenylalanyl-tRNA(Phe) + an N-terminal L-alpha-aminoacyl-[protein] = an N-terminal L-phenylalanyl-L-alpha-aminoacyl-[protein] + tRNA(Phe). Functionally, functions in the N-end rule pathway of protein degradation where it conjugates Leu, Phe and, less efficiently, Met from aminoacyl-tRNAs to the N-termini of proteins containing an N-terminal arginine or lysine. The protein is Leucyl/phenylalanyl-tRNA--protein transferase of Burkholderia vietnamiensis (strain G4 / LMG 22486) (Burkholderia cepacia (strain R1808)).